Here is a 507-residue protein sequence, read N- to C-terminus: Extracellular elastase (507 aa).

A signal peptide spans 1-28; sequence MKNFSKFALTSIAALTVASPLVNTEVDA. A propeptide spanning residues 29–207 is cleaved from the precursor; the sequence is KDKVSATQNI…VVDKLNMIKE (179 aa). Ca(2+) is bound at residue D347. Residue H351 coordinates Zn(2+). Residue E352 is part of the active site. Zn(2+) contacts are provided by H355 and E375. Ca(2+) contacts are provided by D386, E388, D389, L391, E394, Y397, T398, V401, and D404. The active-site Proton donor is H435.

This sequence belongs to the peptidase M4 family. Ca(2+) serves as cofactor. Requires Zn(2+) as cofactor.

It is found in the secreted. Functionally, protease that has a low substrate specificity. Glucagon is preferentially cleaved between aromatic (Phe) and hydrophobic (Val) amino acids. Hydrolyzes casein and elastin. This Staphylococcus epidermidis protein is Extracellular elastase (sepA).